The primary structure comprises 293 residues: Pyridoxal 5'-phosphate synthase subunit PdxS (293 aa).

Asp23 is a D-ribose 5-phosphate binding site. Residue Lys80 is the Schiff-base intermediate with D-ribose 5-phosphate of the active site. Gly152 contacts D-ribose 5-phosphate. Arg164 is a D-glyceraldehyde 3-phosphate binding site. D-ribose 5-phosphate-binding positions include Gly213 and 234 to 235 (GS).

This sequence belongs to the PdxS/SNZ family. In the presence of PdxT, forms a dodecamer of heterodimers.

The enzyme catalyses aldehydo-D-ribose 5-phosphate + D-glyceraldehyde 3-phosphate + L-glutamine = pyridoxal 5'-phosphate + L-glutamate + phosphate + 3 H2O + H(+). It functions in the pathway cofactor biosynthesis; pyridoxal 5'-phosphate biosynthesis. Functionally, catalyzes the formation of pyridoxal 5'-phosphate from ribose 5-phosphate (RBP), glyceraldehyde 3-phosphate (G3P) and ammonia. The ammonia is provided by the PdxT subunit. Can also use ribulose 5-phosphate and dihydroxyacetone phosphate as substrates, resulting from enzyme-catalyzed isomerization of RBP and G3P, respectively. This Roseiflexus castenholzii (strain DSM 13941 / HLO8) protein is Pyridoxal 5'-phosphate synthase subunit PdxS.